The sequence spans 372 residues: NAD(P)H-quinone oxidoreductase subunit 1 (372 aa).

A run of 8 helical transmembrane segments spans residues 27–47, 97–117, 128–148, 166–186, 204–224, 249–269, 308–328, and 351–371; these read AIWM…GVLV, WLFT…FLIV, VGMG…GLLM, AAQS…IAMM, ILGW…IAAL, YSGM…ILSS, SLGI…AILL, and VGLV…FAFG.

This sequence belongs to the complex I subunit 1 family. NDH-1 is composed of at least 11 different subunits.

It localises to the cellular thylakoid membrane. It catalyses the reaction a plastoquinone + NADH + (n+1) H(+)(in) = a plastoquinol + NAD(+) + n H(+)(out). The enzyme catalyses a plastoquinone + NADPH + (n+1) H(+)(in) = a plastoquinol + NADP(+) + n H(+)(out). Functionally, NDH-1 shuttles electrons from an unknown electron donor, via FMN and iron-sulfur (Fe-S) centers, to quinones in the respiratory and/or the photosynthetic chain. The immediate electron acceptor for the enzyme in this species is believed to be plastoquinone. Couples the redox reaction to proton translocation, and thus conserves the redox energy in a proton gradient. This is NAD(P)H-quinone oxidoreductase subunit 1 from Nostoc punctiforme (strain ATCC 29133 / PCC 73102).